A 300-amino-acid chain; its full sequence is Acetyl-coenzyme A carboxylase carboxyl transferase subunit beta 2 (300 aa).

One can recognise a CoA carboxyltransferase N-terminal domain in the interval 26–294; sequence VWIKCPSCRE…ATAHKSEPIV (269 aa). 4 residues coordinate Zn(2+): C30, C33, C49, and C51. Residues 30–51 form a C4-type zinc finger; that stretch reads CPSCRELIYHKQLAERMKVCRC.

It belongs to the AccD/PCCB family. As to quaternary structure, acetyl-CoA carboxylase is a heterohexamer composed of biotin carboxyl carrier protein (AccB), biotin carboxylase (AccC) and two subunits each of ACCase subunit alpha (AccA) and ACCase subunit beta (AccD). The cofactor is Zn(2+).

Its subcellular location is the cytoplasm. The enzyme catalyses N(6)-carboxybiotinyl-L-lysyl-[protein] + acetyl-CoA = N(6)-biotinyl-L-lysyl-[protein] + malonyl-CoA. It functions in the pathway lipid metabolism; malonyl-CoA biosynthesis; malonyl-CoA from acetyl-CoA: step 1/1. Functionally, component of the acetyl coenzyme A carboxylase (ACC) complex. Biotin carboxylase (BC) catalyzes the carboxylation of biotin on its carrier protein (BCCP) and then the CO(2) group is transferred by the transcarboxylase to acetyl-CoA to form malonyl-CoA. The sequence is that of Acetyl-coenzyme A carboxylase carboxyl transferase subunit beta 2 from Roseiflexus sp. (strain RS-1).